Reading from the N-terminus, the 531-residue chain is Protein SIS2 (531 aa).

Residues 1–20 (MPSDKDIKSPAQPKKEEEIP) show a composition bias toward basic and acidic residues. Disordered regions lie at residues 1–42 (MPSD…ANII), 88–127 (SPDS…KSPS), 139–168 (RPVR…EPSS), 180–261 (SLRA…DPRL), and 461–531 (YPED…TTNL). Residues 155–168 (LTPITSPQHSEPSS) show a composition bias toward polar residues. Residues 183 to 198 (ATTNSISSAAASNQST) are compositionally biased toward low complexity. Over residues 204-213 (SGGGGGGGGA) the composition is skewed to gly residues. Positions 214 to 249 (NTATSSNSTTSNTALAAQGTTTTTTTTNSNSNTTTT) are enriched in low complexity. 2 stretches are compositionally biased toward acidic residues: residues 462–472 (PEDEDEDEADD) and 481–514 (AIID…EEDP).

Belongs to the HFCD (homooligomeric flavin containing Cys decarboxylase) superfamily.

It localises to the nucleus. Its subcellular location is the cytoplasm. May stimulate expression of certain genes that are periodically expressed during late G1. Also modulates the expression of the ENA1 ATPase. The sequence is that of Protein SIS2 (SIS2) from Candida tropicalis (Yeast).